The chain runs to 132 residues: uncharacterized protein (132 aa).

Residues 10 to 30 traverse the membrane as a helical segment; that stretch reads LVLFFTIILIALCPFVYYLWD. A coiled-coil region spans residues 50–79; it reads KNCSTEIEHAIEEHKRKNKEKKEAKEKRLA.

It localises to the membrane. This is an uncharacterized protein from Invertebrate iridescent virus 6 (IIV-6).